The following is a 341-amino-acid chain: Homeobox protein knotted-1-like 8 (341 aa).

Over residues 1–17 (MESFASLAGGGSSSTTA) the composition is skewed to low complexity. 3 disordered regions span residues 1–72 (MESF…AVQG), 121–148 (AAQQLDEADGHPRRRHEPQRDDDPDQLD), and 187–207 (AESNCEGTGSSEEEQDPSDKQ). A compositionally biased stretch (polar residues) spans 187–196 (AESNCEGTGS). The 21-residue stretch at 207–227 (QLKHQLLRKYGGSLGDLRQVF) folds into the ELK domain. The segment at residues 228–291 (SKRTKKGKLP…NQRKRHWKPT (64 aa)) is a DNA-binding region (homeobox; TALE-type).

It belongs to the TALE/KNOX homeobox family.

Its subcellular location is the nucleus. Functionally, probable transcription factor that may be involved in shoot formation during embryogenesis. The chain is Homeobox protein knotted-1-like 8 (OSH43) from Oryza sativa subsp. japonica (Rice).